Consider the following 78-residue polypeptide: Large ribosomal subunit protein bL28 (78 aa).

The interval Met1–Asn23 is disordered.

This sequence belongs to the bacterial ribosomal protein bL28 family.

The sequence is that of Large ribosomal subunit protein bL28 from Shewanella sediminis (strain HAW-EB3).